The primary structure comprises 456 residues: MLKKNPYIDAHTTFAIIGLGVSGKAALRYALGFGAHLLVSDRRDEEALLAQLVALAGDVVVDYEAGGHTFQFLSQADVIFVSPGFADGELLARLRRAGVQVLGELALAAPVLDRPVVAITGTNGKTTVTSLVGDLLRASGKRVFVGGNIGVPLLDLLSSGDEVDVIVLEVSSFQLELAGDFSPHIALLLNLSPDHLDRHGDLAGYRAAKMHLFQKQGMTDIAIVSGDDPLCLLSDGCGEASRYLFGFSAASDISVAAGHFEFDFAGQREIYSLRDSALDNRTGWLNAAPAAFIARSLACAKADIERGIAAFTLDAHRMEPVASIAGVQYYNDSKATNTGAVISALQQLVRVILIAGGRDKGDNYRLLREAVAGHVRTLICIGEATPLLVAALEDVVQVYRATSLAEAVSLAASFAEEGDSVLLSPACASFDMFANYQDRGEQFRRQVLQLQDVGSK.

Residue 121 to 127 (GTNGKTT) participates in ATP binding.

This sequence belongs to the MurCDEF family.

The protein resides in the cytoplasm. It carries out the reaction UDP-N-acetyl-alpha-D-muramoyl-L-alanine + D-glutamate + ATP = UDP-N-acetyl-alpha-D-muramoyl-L-alanyl-D-glutamate + ADP + phosphate + H(+). The protein operates within cell wall biogenesis; peptidoglycan biosynthesis. Functionally, cell wall formation. Catalyzes the addition of glutamate to the nucleotide precursor UDP-N-acetylmuramoyl-L-alanine (UMA). The polypeptide is UDP-N-acetylmuramoylalanine--D-glutamate ligase (Desulfotalea psychrophila (strain LSv54 / DSM 12343)).